Reading from the N-terminus, the 189-residue chain is Fine tangled pili major subunit (189 aa).

It belongs to the Dps family. In terms of assembly, hexamer.

Its subcellular location is the fimbrium. Functionally, may contribute to bacterial adherence, or be involved in the protection of the bacteria, or both. This is Fine tangled pili major subunit (ftpA) from Haemophilus ducreyi (strain 35000HP / ATCC 700724).